The primary structure comprises 390 residues: Manganese peroxidase 2 (390 aa).

Positions 1 to 23 (MAFNFAAILAFVSLAAVTSAAPS) are cleaved as a signal peptide. Intrachain disulfides connect Cys-27-Cys-39, Cys-38-Cys-313, Cys-57-Cys-141, Cys-277-Cys-343, and Cys-365-Cys-372. Glu-59 and Glu-63 together coordinate Mn(2+). The Proton acceptor role is filled by His-70. Residues Asp-71, Gly-86, Asp-88, and Ser-90 each coordinate Ca(2+). Residue Asn-155 is glycosylated (N-linked (GlcNAc...) asparagine). His-197 serves as a coordination point for heme b. Ser-198 contributes to the Ca(2+) binding site. Asp-203 lines the Mn(2+) pocket. Ca(2+) is bound by residues Asp-215, Thr-217, and Asp-222. Asn-241 carries N-linked (GlcNAc...) asparagine glycosylation.

This sequence belongs to the peroxidase family. Ligninase subfamily. It depends on heme b as a cofactor. Ca(2+) is required as a cofactor.

It localises to the secreted. The enzyme catalyses 2 Mn(2+) + H2O2 + 2 H(+) = 2 Mn(3+) + 2 H2O. Catalyzes the oxidation of Mn(2+) to Mn(3+). The latter, acting as a diffusible redox mediator, is capable of oxidizing a variety of lignin compounds. The protein is Manganese peroxidase 2 (mnp2) of Phlebia radiata (White-rot fungus).